A 906-amino-acid polypeptide reads, in one-letter code: ATP-dependent DNA helicase PIF1 (906 aa).

Disordered regions lie at residues 77-146 (DSEI…SSTF) and 229-297 (LEGS…PFKV). A compositionally biased stretch (basic and acidic residues) spans 78–87 (SEIKESDDLS). Residues 88–119 (KGQSHVYNGSPVTKNSILQIEKQQIQKSPRPT) are compositionally biased toward polar residues. Over residues 120-132 (ETNKRMQIRKDPD) the composition is skewed to basic and acidic residues. Over residues 234-261 (NKVQADNASPFRITSSFSSPSQIQNQGV) the composition is skewed to polar residues. Residues 273-291 (QNVSSASQSSSPPMTVSQV) are compositionally biased toward low complexity. 390-397 (GSAGTGKS) contacts ATP. A DNA-binding region spans residues 840–859 (QAYVALSRAVSRAGLQVLNF).

It belongs to the helicase family. PIF1 subfamily. As to quaternary structure, monomer. Interacts with telomerase. The cofactor is Mg(2+).

Its subcellular location is the nucleus. The protein resides in the mitochondrion. It carries out the reaction Couples ATP hydrolysis with the unwinding of duplex DNA at the replication fork by translocating in the 5'-3' direction. This creates two antiparallel DNA single strands (ssDNA). The leading ssDNA polymer is the template for DNA polymerase III holoenzyme which synthesizes a continuous strand.. The enzyme catalyses ATP + H2O = ADP + phosphate + H(+). Its function is as follows. DNA-dependent ATPase and 5'-3' DNA helicase required for the maintenance of both mitochondrial and nuclear genome stability. Efficiently unwinds G-quadruplex (G4) DNA structures and forked RNA-DNA hybrids. Resolves G4 structures, preventing replication pausing and double-strand breaks (DSBs) at G4 motifs. Involved in the maintenance of telomeric DNA. Inhibits telomere elongation, de novo telomere formation and telomere addition to DSBs via catalytic inhibition of telomerase. Reduces the processivity of telomerase by displacing active telomerase from DNA ends. Releases telomerase by unwinding the short telomerase RNA/telomeric DNA hybrid that is the intermediate in the telomerase reaction. Involved in the maintenance of ribosomal (rDNA). Required for efficient fork arrest at the replication fork barrier within rDNA. Involved in the maintenance of mitochondrial (mtDNA). Required to maintain mtDNA under conditions that introduce dsDNA breaks in mtDNA, either preventing or repairing dsDNA breaks. May inhibit replication progression to allow time for repair. May have a general role in chromosomal replication by affecting Okazaki fragment maturation. May have a role in conjunction with DNA2 helicase/nuclease in 5'-flap extension during Okazaki fragment processing. In Candida albicans (strain SC5314 / ATCC MYA-2876) (Yeast), this protein is ATP-dependent DNA helicase PIF1.